We begin with the raw amino-acid sequence, 779 residues long: Putative helicase V13 (779 aa).

The SF3 helicase domain occupies 477-642 (DNPKPFITSL…FVKEEELNEK (166 aa)). Residue 504-511 (GKSNAGKS) participates in ATP binding.

The chain is Putative helicase V13 from Acanthamoeba polyphaga (Amoeba).